The primary structure comprises 163 residues: Nucleotide-binding protein Dhaf_3127 (163 aa).

The protein belongs to the YajQ family.

Its function is as follows. Nucleotide-binding protein. The polypeptide is Nucleotide-binding protein Dhaf_3127 (Desulfitobacterium hafniense (strain DSM 10664 / DCB-2)).